We begin with the raw amino-acid sequence, 290 residues long: Agglutinin-2 (290 aa).

The first 35 residues, 1–35 (MAISNTNLLQTKKPISLPLLAFITLFLMLLNRVNS), serve as a signal peptide directing secretion. N-linked (GlcNAc...) asparagine glycosylation occurs at asparagine 155. Mn(2+)-binding residues include glutamate 165 and aspartate 167. 3 residues coordinate Ca(2+): aspartate 167, asparagine 171, and aspartate 175. The Mn(2+) site is built by aspartate 175 and histidine 180. A glycan (N-linked (GlcNAc...) asparagine) is linked at asparagine 200.

It belongs to the leguminous lectin family. As to quaternary structure, homotetramer.

Mannose/glucose binding bark lectin. Functionally, bark lectins are storage proteins that probably maintain stocks of nitrogen during dormant period. Self-aggregatable molecules that can bind their own carbohydrate side chains. They could also play a role in the plant's defense against phytophagous invertebrates or herbivorous higher animals. The sequence is that of Agglutinin-2 from Cladrastis kentukea (Yellow wood).